A 542-amino-acid chain; its full sequence is Keratin, type II cytoskeletal 75 (542 aa).

A compositionally biased stretch (polar residues) spans 1–26; sequence MSRQSTVTFHSGSRRGFSTASATTPT. A disordered region spans residues 1–44; sequence MSRQSTVTFHSGSRRGFSTASATTPTAGRSRFSSVSVARSSGNS. A head region spans residues 1–139; that stretch reads MSRQSTVTFH…DPTIQRVRKE (139 aa). Low complexity predominate over residues 27 to 42; the sequence is AGRSRFSSVSVARSSG. The coil 1A stretch occupies residues 140 to 175; sequence EREQIKTLNNKFASFIDKVRFLEQQNKVLETKWNLL. The region spanning 140–453 is the IF rod domain; that stretch reads EREQIKTLNN…KLLEGEECRL (314 aa). Positions 176–194 are linker 1; that stretch reads QEQGSRTVRQNLEPFFDAY. The coil 1B stretch occupies residues 195 to 287; sequence VNDLRRQLDS…VYEAELSQMQ (93 aa). The linker 12 stretch occupies residues 288–310; it reads NQVSDTSVVLSMDNNRSLDLDSI. Residues 311 to 449 form a coil 2 region; it reads IAEVKAQYED…ATYRKLLEGE (139 aa). Residues 450–542 form a tail region; it reads ECRLSGEGVS…TSSSRKSYKH (93 aa). Positions 514–542 are disordered; the sequence is TSSSRGPVGSGSSIKFVSSTSSSRKSYKH.

This sequence belongs to the intermediate filament family. As to quaternary structure, heterodimer of a type I and a type II keratin. May associate with KRT17.

Its function is as follows. Plays a central role in hair and nail formation. Essential component of keratin intermediate filaments in the companion layer of the hair follicle. The chain is Keratin, type II cytoskeletal 75 (Krt75) from Rattus norvegicus (Rat).